The primary structure comprises 1929 residues: Intraflagellar transport protein 140 (1929 aa).

WD repeat units lie at residues 76 to 116 (QVQV…PSYK) and 119 to 158 (LHQE…YSFE). A disordered region spans residues 774–795 (LSTPDTGSPAVEAEESPQRQTR). LRR repeat units lie at residues 957-980 (STSL…TFTK), 1019-1044 (ISLL…SLAE), and 1510-1532 (AQSL…LADI).

It localises to the cell projection. Its subcellular location is the cilium. It is found in the flagellum. The protein localises to the cytoplasm. The protein resides in the cytoskeleton. It localises to the flagellum axoneme. Its subcellular location is the flagellum basal body. In terms of biological role, component of the intraflagellar transport complex A (IFT-A) involved in flagellar assembly. In Giardia intestinalis (strain ATCC 50803 / WB clone C6) (Giardia lamblia), this protein is Intraflagellar transport protein 140.